Consider the following 1212-residue polypeptide: Metabotropic glutamate receptor 5 (1212 aa).

The N-terminal stretch at 1–20 (MVLLLILSVLLLKEDVRGSA) is a signal peptide. The Extracellular portion of the chain corresponds to 22 to 580 (SSERRVVAHM…QYLRWGDPEP (559 aa)). Cysteine 57 and cysteine 99 are joined by a disulfide. Tyrosine 64 lines the L-glutamate pocket. Asparagine 88 carries N-linked (GlcNAc...) asparagine glycosylation. Residues serine 152 and 173–175 (SAT) contribute to the L-glutamate site. A glycan (N-linked (GlcNAc...) asparagine) is linked at asparagine 210. L-glutamate is bound at residue tyrosine 223. 8 disulfide bridges follow: cysteine 241/cysteine 530, cysteine 276/cysteine 278, cysteine 365/cysteine 381, cysteine 419/cysteine 426, cysteine 511/cysteine 531, cysteine 515/cysteine 534, cysteine 537/cysteine 549, and cysteine 552/cysteine 565. Aspartate 305 lines the L-glutamate pocket. N-linked (GlcNAc...) asparagine glycans are attached at residues asparagine 378 and asparagine 382. Lysine 396 serves as a coordination point for L-glutamate. The N-linked (GlcNAc...) asparagine glycan is linked to asparagine 445. A helical transmembrane segment spans residues 581-603 (IAAVVFACLGLLATLFVTVVFII). Over 604-613 (YRDTPVVKSS) the chain is Cytoplasmic. A helical transmembrane segment spans residues 614 to 636 (SRELCYIILAGICLGYLCTFCLI). Over 637-644 (AKPKQIYC) the chain is Extracellular. An intrachain disulfide couples cysteine 644 to cysteine 733. The helical transmembrane segment at 645–667 (YLQRIGIGLSPAMSYSALVTKTN) threads the bilayer. Topologically, residues 668–693 (RIARILAGSKKKICTKKPRFMSACAQ) are cytoplasmic. The helical transmembrane segment at 694-714 (LVIAFILICIQLGIIVALFIM) threads the bilayer. Topologically, residues 715 to 737 (EPPDIMHDYPSIREVYLICNTTN) are extracellular. An N-linked (GlcNAc...) asparagine glycan is attached at asparagine 734. Residues 738-759 (LGVVTPLGYNGLLILSCTFYAF) traverse the membrane as a helical segment. Topologically, residues 760-772 (KTRNVPANFNEAK) are cytoplasmic. A helical membrane pass occupies residues 773 to 795 (YIAFTMYTTCIIWLAFVPIYFGS). Residues 796 to 798 (NYK) are Extracellular-facing. A helical membrane pass occupies residues 799–820 (IITMCFSVSLSATVALGCMFVP). The Cytoplasmic portion of the chain corresponds to 821–1212 (KVYIILAKPE…RDYTQSSSSL (392 aa)). Residue serine 861 is modified to Phosphoserine. Residues arginine 869 and arginine 925 each carry the omega-N-methylarginine modification. 3 disordered regions span residues 937–971 (INKK…GGSA), 1010–1056 (FPAP…SQGS), and 1132–1191 (GAQA…ALCI). Gly residues predominate over residues 961–971 (LGAGAGAGGSA). A phosphoserine mark is found at serine 1018 and serine 1020. Residues 1132–1153 (GAQAAGDAARESPAAGPEAAAA) show a composition bias toward low complexity. Residues 1174–1185 (DSGSTTPNSPVS) are compositionally biased toward polar residues.

It belongs to the G-protein coupled receptor 3 family. As to quaternary structure, the PPXXF motif binds HOMER1, HOMER2 and HOMER3. Interacts with SIAH1, RYR1, RYR2, ITPR1, SHANK1, SHANK3 and TAMALIN. Interacts with NCDN. Isoform 2 interacts with NECAB2. Interacts with CAMK2A.

The protein localises to the cell membrane. Its function is as follows. G-protein coupled receptor for glutamate. Ligand binding causes a conformation change that triggers signaling via guanine nucleotide-binding proteins (G proteins) and modulates the activity of down-stream effectors. Signaling activates a phosphatidylinositol-calcium second messenger system and generates a calcium-activated chloride current. Plays an important role in the regulation of synaptic plasticity and the modulation of the neural network activity. The sequence is that of Metabotropic glutamate receptor 5 (GRM5) from Homo sapiens (Human).